The following is a 105-amino-acid chain: Large ribosomal subunit protein eL36 (105 aa).

It belongs to the eukaryotic ribosomal protein eL36 family. In terms of assembly, component of the large ribosomal subunit.

Its subcellular location is the cytoplasm. The protein localises to the cytosol. Component of the large ribosomal subunit. The ribosome is a large ribonucleoprotein complex responsible for the synthesis of proteins in the cell. This chain is Large ribosomal subunit protein eL36 (rpl36), found in Xenopus laevis (African clawed frog).